Reading from the N-terminus, the 449-residue chain is uncharacterized protein (449 aa).

Phosphoserine is present on Ser-420.

The protein belongs to the NAD kinase family.

It localises to the cytoplasm. Its subcellular location is the nucleus. This is an uncharacterized protein from Schizosaccharomyces pombe (strain 972 / ATCC 24843) (Fission yeast).